The chain runs to 96 residues: Large ribosomal subunit protein bL28 (96 aa).

The protein belongs to the bacterial ribosomal protein bL28 family.

In Methylobacterium nodulans (strain LMG 21967 / CNCM I-2342 / ORS 2060), this protein is Large ribosomal subunit protein bL28.